The chain runs to 398 residues: tRNA-specific 2-thiouridylase MnmA (398 aa).

ATP is bound by residues 19-26 (AMSGGVDS) and Leu45. The active-site Nucleophile is the Cys113. A disulfide bridge links Cys113 with Cys210. An ATP-binding site is contributed by Gly137. Residues 160–162 (RDQ) form an interaction with tRNA region. The active-site Cysteine persulfide intermediate is Cys210.

This sequence belongs to the MnmA/TRMU family.

It is found in the cytoplasm. It carries out the reaction S-sulfanyl-L-cysteinyl-[protein] + uridine(34) in tRNA + AH2 + ATP = 2-thiouridine(34) in tRNA + L-cysteinyl-[protein] + A + AMP + diphosphate + H(+). Functionally, catalyzes the 2-thiolation of uridine at the wobble position (U34) of tRNA, leading to the formation of s(2)U34. This chain is tRNA-specific 2-thiouridylase MnmA, found in Rhodopseudomonas palustris (strain HaA2).